A 254-amino-acid chain; its full sequence is Probable transcriptional regulatory protein Saro_0419 (254 aa).

Residues 1 to 14 (MAGHSKFKNIMHRK) are compositionally biased toward basic residues. A disordered region spans residues 1–22 (MAGHSKFKNIMHRKGAQDKKRS).

The protein belongs to the TACO1 family.

Its subcellular location is the cytoplasm. The protein is Probable transcriptional regulatory protein Saro_0419 of Novosphingobium aromaticivorans (strain ATCC 700278 / DSM 12444 / CCUG 56034 / CIP 105152 / NBRC 16084 / F199).